Reading from the N-terminus, the 339-residue chain is MTSWRDKSAKVQVKESELPSSIPAQTGLTFNIWYNKWSQGFAGNTRFVSPFALQPQLHSGKTRGDNDGQLFFCLFFAKGMCCLGPKCEYLHHIPDEEDIGKLALRTEVLDCFGREKFADYREDMGGIGSFRKKNKTLYVGGIDGALNSKHLKPAQIESRIRFVFSRLGDIDRIRYVESKNCGFVKFKYQANAEFAKEAMSNQTLLLPSDKEWDDRREGTGLLVKWANEDPDPAAQKRLQEELKLESLNMMVHLINNNTNSAGTEVNNKNNERLDRTFPEASVDNVKKRLLPLDNGMESDDFIEKLKKVKKNISRENISSKPSVGKLGGPLLDYLSSDED.

The C3H1-type zinc finger occupies 67 to 94 (DGQLFFCLFFAKGMCCLGPKCEYLHHIP). The 94-residue stretch at 135–228 (KTLYVGGIDG…TGLLVKWANE (94 aa)) folds into the RRM domain. Residues 313–339 (SRENISSKPSVGKLGGPLLDYLSSDED) are disordered. Phosphoserine occurs at positions 335 and 336.

It belongs to the RRM CWC2 family. Belongs to the CWC complex (or CEF1-associated complex), a spliceosome subcomplex composed of the U2, U5 and U6 snRNAs and at least BUD13, BUD31, BRR2, CDC40, CEF1, CLF1, CUS1, CWC2, CWC15, CWC21, CWC22, CWC23, CWC24, CWC25, CWC27, ECM2, HSH155, IST3, ISY1, LEA1, MSL1, NTC20, PRP8, PRP9, PRP11, PRP19, PRP21, PRP22, PRP45, PRP46, SLU7, SMB1, SMD1, SMD2, SMD3, SMX2, SMX3, SNT309, SNU114, SPP2, SYF1, SYF2, RSE1 and YJU2. Interacts with ISY1. Interacts with PRP19.

The protein localises to the nucleus. Its function is as follows. Involved in the first step of pre-mRNA splicing. Required for cell growth and cell cycle control. Plays a role in the levels of the U1, U4, U5 and U6 snRNAs and the maintenance of the U4/U6 snRNA complex. May provide the link between the 'nineteen complex' NTC spliceosome protein complex and the spliceosome through the U6 snRNA. Associates predominantly with U6 snRNAs in assembled active spliceosomes. Binds directly to the internal stem-loop (ISL) domain of the U6 snRNA and to the pre-mRNA intron near the 5' splice site during the activation and catalytic phases of the spliceosome cycle. Binds also to U1, U4, U5 and U6 snRNAs and to pre-mRNAs, in vitro. Is not required for the Prp2-mediated remodeling of the activated spliceosome. This is Pre-mRNA-splicing factor CWC2 (CWC2) from Saccharomyces cerevisiae (strain ATCC 204508 / S288c) (Baker's yeast).